An 89-amino-acid polypeptide reads, in one-letter code: Bacterial microcompartment shell vertex protein GrpN (89 aa).

Positions 1–83 (MYLGKVIGTV…IDAAVVGIVD (83 aa)) constitute a BMV domain.

It belongs to the CcmL/EutN family. Homopentamer with a small central pore.

The protein localises to the bacterial microcompartment. Functionally, probably forms vertices in the bacterial microcompartment (BMC) predicted to be involved in glycyl radical-based 1,2-propanediol metabolism in this organism. In Rhodospirillum rubrum (strain F11), this protein is Bacterial microcompartment shell vertex protein GrpN.